The chain runs to 257 residues: Type III pantothenate kinase (257 aa).

6 to 13 (EQGNTNTL) is an ATP binding site. 107-110 (GADR) lines the substrate pocket. The active-site Proton acceptor is the aspartate 109. Aspartate 129 contributes to the K(+) binding site. An ATP-binding site is contributed by threonine 132. Threonine 184 contacts substrate.

This sequence belongs to the type III pantothenate kinase family. As to quaternary structure, homodimer. NH4(+) serves as cofactor. The cofactor is K(+).

Its subcellular location is the cytoplasm. The enzyme catalyses (R)-pantothenate + ATP = (R)-4'-phosphopantothenate + ADP + H(+). It participates in cofactor biosynthesis; coenzyme A biosynthesis; CoA from (R)-pantothenate: step 1/5. Catalyzes the phosphorylation of pantothenate (Pan), the first step in CoA biosynthesis. This Phenylobacterium zucineum (strain HLK1) protein is Type III pantothenate kinase.